Consider the following 236-residue polypeptide: Terpene cyclase andB (236 aa).

7 helical membrane-spanning segments follow: residues 13–33, 45–65, 70–90, 106–126, 135–155, 166–186, and 200–220; these read TVVN…YILM, MSML…ILCP, VVRP…YAAI, HLPL…IALI, FLWS…FQLL, VLWL…TLMW, and LTAY…VVFY.

Belongs to the paxB family.

The protein resides in the membrane. It participates in secondary metabolite biosynthesis; terpenoid biosynthesis. Functionally, terpene cyclase; part of the gene cluster that mediates the biosynthesis of anditomin, a fungal meroterpenoid. The first step of the pathway is the synthesis of 3,5-dimethylorsellinic acid (DMOA) by the polyketide synthase andM. DMOA is then converted to the phthalide compound 5,7-dihydroxy-4,6-dimethylphthalide (DHDMP) by the cytochrome P450 monooxygenase andK, which is further prenylated by the prenyltransferase andD to yield farnesyl-DHDMP. Further epoxidation by the FAD-dependent monooxygenase andE leads to epoxyfarnesyl-DHDMP. The next step involves the terpene cyclase andB that converts epoxyfarnesyl-DHDMP into preandiloid A through opening of the epoxide ring followed by the cyclization of the farnesyl moiety. Preandiloid A is in turn oxidized at the C-3 hydroxyl group to yield preandiloid B by the dehydrogenase andC. The dioxygenase andA is solely responsible for the dehydrogenation of preandiloid B leading to the enone preandiloid C, as well as for the intriguing structural rearrangement to generate the bicyclo[2.2.2]octane core, transforming preandiloid C into andiconin. FAD-binding monooxygenase andJ then produces andilesin D which is reduced by dehydrogenase andI to yield andilesin A. Action of acetyltransferase andG followed by a spontaneous acetate elimination leads then to andilesin B, which is in turn substrate of the short chain dehydrogenase andH to yield andilesin C. Finally, the dioxygenase andF catalyzes the transformation of andilesin C to anditomin. The chain is Terpene cyclase andB from Emericella variicolor (Aspergillus stellatus).